We begin with the raw amino-acid sequence, 418 residues long: Tyrosine--tRNA ligase (418 aa).

An L-tyrosine-binding site is contributed by Tyr-34. The 'HIGH' region signature appears at Pro-39–His-48. The L-tyrosine site is built by Tyr-166 and Gln-170. The short motif at Lys-228–Thr-232 is the 'KMSKS' region element. An ATP-binding site is contributed by Lys-231. In terms of domain architecture, S4 RNA-binding spans Thr-350 to Lys-417.

Belongs to the class-I aminoacyl-tRNA synthetase family. TyrS type 1 subfamily. Homodimer.

The protein resides in the cytoplasm. The enzyme catalyses tRNA(Tyr) + L-tyrosine + ATP = L-tyrosyl-tRNA(Tyr) + AMP + diphosphate + H(+). Catalyzes the attachment of tyrosine to tRNA(Tyr) in a two-step reaction: tyrosine is first activated by ATP to form Tyr-AMP and then transferred to the acceptor end of tRNA(Tyr). This is Tyrosine--tRNA ligase from Levilactobacillus brevis (Lactobacillus brevis).